The following is a 269-amino-acid chain: 3-methyl-2-oxobutanoate hydroxymethyltransferase (269 aa).

The Mg(2+) site is built by Asp43 and Asp82. Residues 43-44 (DS), Asp82, and Lys110 contribute to the 3-methyl-2-oxobutanoate site. Glu112 serves as a coordination point for Mg(2+). Glu179 (proton acceptor) is an active-site residue.

The protein belongs to the PanB family. In terms of assembly, homodecamer; pentamer of dimers. Requires Mg(2+) as cofactor.

The protein localises to the cytoplasm. The catalysed reaction is 3-methyl-2-oxobutanoate + (6R)-5,10-methylene-5,6,7,8-tetrahydrofolate + H2O = 2-dehydropantoate + (6S)-5,6,7,8-tetrahydrofolate. Its pathway is cofactor biosynthesis; (R)-pantothenate biosynthesis; (R)-pantoate from 3-methyl-2-oxobutanoate: step 1/2. Catalyzes the reversible reaction in which hydroxymethyl group from 5,10-methylenetetrahydrofolate is transferred onto alpha-ketoisovalerate to form ketopantoate. The sequence is that of 3-methyl-2-oxobutanoate hydroxymethyltransferase from Acinetobacter baumannii (strain AB307-0294).